The primary structure comprises 124 residues: MSKVAEVLEIVKGLTVLELAELVKAFEEEFGVSAAAPVAVAAAPAAGAAAAEEEKTEFDVILTSAGDKKINVIKVVREITGLGLKEAKELVDGAPKPVKEKIAKEEAESIKAKLTEAGATVDVK.

This sequence belongs to the bacterial ribosomal protein bL12 family. As to quaternary structure, homodimer. Part of the ribosomal stalk of the 50S ribosomal subunit. Forms a multimeric L10(L12)X complex, where L10 forms an elongated spine to which 2 to 4 L12 dimers bind in a sequential fashion. Binds GTP-bound translation factors.

Forms part of the ribosomal stalk which helps the ribosome interact with GTP-bound translation factors. Is thus essential for accurate translation. The protein is Large ribosomal subunit protein bL12 of Desulforamulus reducens (strain ATCC BAA-1160 / DSM 100696 / MI-1) (Desulfotomaculum reducens).